The chain runs to 86 residues: Large ribosomal subunit protein bL31B (86 aa).

It belongs to the bacterial ribosomal protein bL31 family. Type B subfamily. As to quaternary structure, part of the 50S ribosomal subunit.

The polypeptide is Large ribosomal subunit protein bL31B (Salmonella arizonae (strain ATCC BAA-731 / CDC346-86 / RSK2980)).